Reading from the N-terminus, the 112-residue chain is Evasin P1095 (112 aa).

The N-terminal stretch at 1–23 is a signal peptide; that stretch reads MELNAFTILQIAVFIAVGYHANT. 3 disulfide bridges follow: C48–C66, C52–C68, and C62–C79. Residue N51 is glycosylated (N-linked (GlcNAc...) asparagine). Positions 89 to 112 are disordered; sequence GDPNDDPKINEATPQTQIFEKKRK.

The protein resides in the secreted. Functionally, salivary chemokine-binding protein which binds to host chemokine CXCL8. The sequence is that of Evasin P1095 from Ixodes ricinus (Common tick).